The following is a 100-amino-acid chain: Small ribosomal subunit protein uS14 (100 aa).

It belongs to the universal ribosomal protein uS14 family. Part of the 30S ribosomal subunit. Contacts proteins S3 and S10.

In terms of biological role, binds 16S rRNA, required for the assembly of 30S particles and may also be responsible for determining the conformation of the 16S rRNA at the A site. In Synechococcus sp. (strain CC9605), this protein is Small ribosomal subunit protein uS14.